Reading from the N-terminus, the 497-residue chain is Probable cytosol aminopeptidase (497 aa).

Mn(2+)-binding residues include lysine 263 and aspartate 268. Lysine 275 is a catalytic residue. Mn(2+) contacts are provided by aspartate 286, aspartate 345, and glutamate 347. The active site involves arginine 349.

Belongs to the peptidase M17 family. Mn(2+) is required as a cofactor.

It is found in the cytoplasm. It carries out the reaction Release of an N-terminal amino acid, Xaa-|-Yaa-, in which Xaa is preferably Leu, but may be other amino acids including Pro although not Arg or Lys, and Yaa may be Pro. Amino acid amides and methyl esters are also readily hydrolyzed, but rates on arylamides are exceedingly low.. It catalyses the reaction Release of an N-terminal amino acid, preferentially leucine, but not glutamic or aspartic acids.. Presumably involved in the processing and regular turnover of intracellular proteins. Catalyzes the removal of unsubstituted N-terminal amino acids from various peptides. This chain is Probable cytosol aminopeptidase, found in Sinorhizobium medicae (strain WSM419) (Ensifer medicae).